Reading from the N-terminus, the 573-residue chain is Proline--tRNA ligase (573 aa).

It belongs to the class-II aminoacyl-tRNA synthetase family. ProS type 1 subfamily. As to quaternary structure, homodimer.

It localises to the cytoplasm. The catalysed reaction is tRNA(Pro) + L-proline + ATP = L-prolyl-tRNA(Pro) + AMP + diphosphate. Catalyzes the attachment of proline to tRNA(Pro) in a two-step reaction: proline is first activated by ATP to form Pro-AMP and then transferred to the acceptor end of tRNA(Pro). As ProRS can inadvertently accommodate and process non-cognate amino acids such as alanine and cysteine, to avoid such errors it has two additional distinct editing activities against alanine. One activity is designated as 'pretransfer' editing and involves the tRNA(Pro)-independent hydrolysis of activated Ala-AMP. The other activity is designated 'posttransfer' editing and involves deacylation of mischarged Ala-tRNA(Pro). The misacylated Cys-tRNA(Pro) is not edited by ProRS. This is Proline--tRNA ligase from Caldanaerobacter subterraneus subsp. tengcongensis (strain DSM 15242 / JCM 11007 / NBRC 100824 / MB4) (Thermoanaerobacter tengcongensis).